The following is a 373-amino-acid chain: MTMKFELDKTSGRARRGRMVFERGTVETPAFMPVGTLGTVKGMTPEEVKDTGAQICLGNTFHLMLRPGTQIIQQHGDLHDFMNWDKPILTDSGGFQVFSLGELRKITEEGVTFRSPINGEKILLTPEKSMQVQRELGSDIVMIFDECTPFPATQAEARSSMELSLRWAERSKQEHGESKAALFGIIQGGMYEELRDISLKGLTDIGFDGYAIGGLSVGEPKEDMMRILEHTAPQMPEQKPRYLMGVGKPEDLVEAVRRGIDMFDCVMPTRNARNGHLFISTGVVKIRNAVHRTDTSPLDENCDCYTCKNYSRAYLHHLDRTNEMLGSRLNTIHNLRFYQKVMSDMRDALDAGTFDDYVKEFYRLRDQSVPALD.

The Proton acceptor role is filled by Asp91. Substrate-binding positions include 91–95 (DSGGF), Asp145, Gln187, and Gly214. Residues 245–251 (GVGKPED) are RNA binding. Asp264 serves as the catalytic Nucleophile. The segment at 269–273 (TRNAR) is RNA binding; important for wobble base 34 recognition. Zn(2+) is bound by residues Cys302, Cys304, Cys307, and His333.

The protein belongs to the queuine tRNA-ribosyltransferase family. In terms of assembly, homodimer. Within each dimer, one monomer is responsible for RNA recognition and catalysis, while the other monomer binds to the replacement base PreQ1. The cofactor is Zn(2+).

It catalyses the reaction 7-aminomethyl-7-carbaguanine + guanosine(34) in tRNA = 7-aminomethyl-7-carbaguanosine(34) in tRNA + guanine. It functions in the pathway tRNA modification; tRNA-queuosine biosynthesis. Functionally, catalyzes the base-exchange of a guanine (G) residue with the queuine precursor 7-aminomethyl-7-deazaguanine (PreQ1) at position 34 (anticodon wobble position) in tRNAs with GU(N) anticodons (tRNA-Asp, -Asn, -His and -Tyr). Catalysis occurs through a double-displacement mechanism. The nucleophile active site attacks the C1' of nucleotide 34 to detach the guanine base from the RNA, forming a covalent enzyme-RNA intermediate. The proton acceptor active site deprotonates the incoming PreQ1, allowing a nucleophilic attack on the C1' of the ribose to form the product. After dissociation, two additional enzymatic reactions on the tRNA convert PreQ1 to queuine (Q), resulting in the hypermodified nucleoside queuosine (7-(((4,5-cis-dihydroxy-2-cyclopenten-1-yl)amino)methyl)-7-deazaguanosine). The sequence is that of Queuine tRNA-ribosyltransferase from Idiomarina loihiensis (strain ATCC BAA-735 / DSM 15497 / L2-TR).